Consider the following 393-residue polypeptide: Flap endonuclease 1 (393 aa).

An N-domain region spans residues 1-108 (MGVLGLSKLL…SELESRRQRA (108 aa)). Aspartate 34 lines the Mg(2+) pocket. Arginine 74 lines the DNA pocket. Mg(2+) is bound at residue aspartate 90. The segment covering 99-120 (SELESRRQRAEDAKHEFEKAKE) has biased composition (basic and acidic residues). Residues 99 to 127 (SELESRRQRAEDAKHEFEKAKEEGDDEAM) are disordered. The I-domain stretch occupies residues 126–257 (AMEKMSKRMV…HKAWEGIKKY (132 aa)). Residues glutamate 162, glutamate 164, aspartate 183, and aspartate 185 each contribute to the Mg(2+) site. Glutamate 162 contributes to the DNA binding site. DNA contacts are provided by glycine 235 and aspartate 237. Aspartate 237 is a Mg(2+) binding site. The interval 340–348 (TQGRLDQFF) is interaction with PCNA. The segment at 358 to 393 (NSEASTAGTKRNRGAVALPGVLQRKSSSGHKKAVKK) is disordered. Residues 384 to 393 (SSGHKKAVKK) show a composition bias toward basic residues.

It belongs to the XPG/RAD2 endonuclease family. FEN1 subfamily. In terms of assembly, interacts with PCNA. Three molecules of FEN1 bind to one PCNA trimer with each molecule binding to one PCNA monomer. PCNA stimulates the nuclease activity without altering cleavage specificity. Requires Mg(2+) as cofactor. Phosphorylated. Phosphorylation upon DNA damage induces relocalization to the nuclear plasma.

The protein localises to the nucleus. Its subcellular location is the nucleolus. The protein resides in the nucleoplasm. It localises to the mitochondrion. Its function is as follows. Structure-specific nuclease with 5'-flap endonuclease and 5'-3' exonuclease activities involved in DNA replication and repair. During DNA replication, cleaves the 5'-overhanging flap structure that is generated by displacement synthesis when DNA polymerase encounters the 5'-end of a downstream Okazaki fragment. It enters the flap from the 5'-end and then tracks to cleave the flap base, leaving a nick for ligation. Also involved in the long patch base excision repair (LP-BER) pathway, by cleaving within the apurinic/apyrimidinic (AP) site-terminated flap. Acts as a genome stabilization factor that prevents flaps from equilibrating into structures that lead to duplications and deletions. Also possesses 5'-3' exonuclease activity on nicked or gapped double-stranded DNA, and exhibits RNase H activity. Also involved in replication and repair of rDNA and in repairing mitochondrial DNA. The sequence is that of Flap endonuclease 1 from Trypanosoma brucei brucei (strain 927/4 GUTat10.1).